We begin with the raw amino-acid sequence, 98 residues long: MKINQLAVAGTLESGDVMIRIAPLDTQDIDLQINSSVEKQFGEAIRATILEVLSRYDVRGVQLNVDDKGALDCILRARLETLLARASGIAALPWEDRQ.

Residue Ser-14 is modified to O-(phosphoribosyl dephospho-coenzyme A)serine.

The protein belongs to the CitD family. As to quaternary structure, oligomer with a subunit composition of (alpha,beta,gamma)6.

The protein resides in the cytoplasm. In terms of biological role, covalent carrier of the coenzyme of citrate lyase. The sequence is that of Citrate lyase acyl carrier protein from Salmonella arizonae (strain ATCC BAA-731 / CDC346-86 / RSK2980).